The following is a 115-amino-acid chain: Large ribosomal subunit protein bL19 (115 aa).

This sequence belongs to the bacterial ribosomal protein bL19 family.

Functionally, this protein is located at the 30S-50S ribosomal subunit interface and may play a role in the structure and function of the aminoacyl-tRNA binding site. The protein is Large ribosomal subunit protein bL19 of Alkaliphilus oremlandii (strain OhILAs) (Clostridium oremlandii (strain OhILAs)).